The primary structure comprises 548 residues: Glycosyl hydrolase family 109 protein 3 (548 aa).

A signal peptide spans 1–21 (MKLKKLLLSVLMLLSISGLQA). NAD(+)-binding positions include 71–72 (MR), Asp-93, 141–144 (WNHH), 161–162 (EV), and Asn-190. Residue Tyr-219 participates in substrate binding. Position 240 to 244 (240 to 244 (DNLHW)) interacts with NAD(+). Substrate is bound by residues Arg-245, 257 to 260 (YATH), and Tyr-335. Tyr-257 lines the NAD(+) pocket.

The protein belongs to the Gfo/Idh/MocA family. Glycosyl hydrolase 109 subfamily. NAD(+) serves as cofactor.

In terms of biological role, glycosidase. In Phocaeicola vulgatus (strain ATCC 8482 / DSM 1447 / JCM 5826 / CCUG 4940 / NBRC 14291 / NCTC 11154) (Bacteroides vulgatus), this protein is Glycosyl hydrolase family 109 protein 3.